A 299-amino-acid chain; its full sequence is Cathepsin B-like CP3 (299 aa).

Positions 1 to 19 (MKLFLLAAAAFSAPALTVS) are cleaved as a signal peptide. 3 cysteine pairs are disulfide-bonded: Cys-87/Cys-114, Cys-97/Cys-140, and Cys-133/Cys-176. Cys-100 is an active-site residue. Residues His-244 and Asn-265 contribute to the active site.

Belongs to the peptidase C1 family.

It is found in the vacuole. Its function is as follows. Thiol protease which is required for parasite excystation and invasion of the proximal small intestine of the human host. The chain is Cathepsin B-like CP3 (CP3) from Giardia intestinalis (Giardia lamblia).